A 217-amino-acid chain; its full sequence is uncharacterized protein (217 aa).

Transmembrane regions (helical) follow at residues 13 to 35 (IWLT…IALL), 50 to 68 (FSLV…ILYL), 75 to 94 (FLLA…EWRI), 109 to 131 (MMAL…LFSL), 152 to 174 (YLAI…AAAV), and 194 to 216 (GFSL…FAGL).

It is found in the cell membrane. This is an uncharacterized protein from Archaeoglobus fulgidus (strain ATCC 49558 / DSM 4304 / JCM 9628 / NBRC 100126 / VC-16).